A 294-amino-acid chain; its full sequence is Flavin-dependent thymidylate synthase (294 aa).

In terms of domain architecture, ThyX spans 27-250 (GFIRVIDYMG…PFTYEAFEEY (224 aa)). Residues threonine 73, 96–98 (RHR), and glutamate 104 each bind FAD. Residues 93–96 (QWIR), 104–108 (EYSAR), and arginine 189 contribute to the dUMP site. Residues 96 to 106 (RHRTASVNEYS) carry the ThyX motif motif. FAD-binding positions include 205 to 207 (NLH) and histidine 211. Arginine 216 provides a ligand contact to dUMP. Arginine 216 (involved in ionization of N3 of dUMP, leading to its activation) is an active-site residue.

The protein belongs to the thymidylate synthase ThyX family. In terms of assembly, homotetramer. It depends on FAD as a cofactor.

It catalyses the reaction dUMP + (6R)-5,10-methylene-5,6,7,8-tetrahydrofolate + NADPH + H(+) = dTMP + (6S)-5,6,7,8-tetrahydrofolate + NADP(+). It participates in pyrimidine metabolism; dTTP biosynthesis. In terms of biological role, catalyzes the reductive methylation of 2'-deoxyuridine-5'-monophosphate (dUMP) to 2'-deoxythymidine-5'-monophosphate (dTMP) while utilizing 5,10-methylenetetrahydrofolate (mTHF) as the methyl donor, and NADPH and FADH(2) as the reductant. This chain is Flavin-dependent thymidylate synthase, found in Rickettsia prowazekii (strain Madrid E).